Reading from the N-terminus, the 386-residue chain is MLSRKKTKNEVSKPAEVQGKYVKKETSPLLRNLMPSFIRHGPTIPRRTDLCLPDSSATAFSASGDGVVSRNQSFLRTAIQRTPHEVMRRESHRLSAPSYLVRSLADVPRECGSSQSFLTEVNFAVENGDSGSRYFFSDNFFDGQRRRPLGDRAQEDYRYYEYNHDLFQRMPQSQGRHTSGIGRVTATSLGNLTNHGSEDLPLPPGWSVDWTMRGRKYYIDHNTNTTHWSHPLEREGLPPGWERVESSEFGTYYVDHTNKRAQYRHPCAPSVPRYDQPPPITYQPQQTERNQSLLVPANPYHTAEIPDWLQVYARAPVKYDHILKWELFQLADLDTYQGMLKLLFMKELEQIVKLYEAYRQALLTELENRKQRQQWYAQQHGKTFLS.

Residues Ser95 and Ser137 each carry the phosphoserine modification. WW domains are found at residues 200-233 (LPLP…HPLE) and 235-268 (EGLP…HPCA). Thr211 carries the phosphothreonine modification. The SARAH domain occupies 322–369 (ILKWELFQLADLDTYQGMLKLLFMKELEQIVKLYEAYRQALLTELENR). Positions 345–374 (MKELEQIVKLYEAYRQALLTELENRKQRQQ) form a coiled coil.

As to quaternary structure, homodimer. Stabilized through interaction with STK3/MST2 or STK4/MST1. Interacts (via SARAH domain) with isoform 1 of NEK2. Interacts with ESR1 only in the presence of STK3/MST2. Interacts with WTIP and AJUBA. In terms of processing, phosphorylated by STK3/MST2 and STK4/MST1. Phosphorylation is not required for SAV1 stability and may increase the number of protein binding sites on the scaffold molecule. In terms of tissue distribution, ubiquitously expressed in adult tissues with the highest level found in testis.

The protein resides in the nucleus. It localises to the cytoplasm. Functionally, regulator of STK3/MST2 and STK4/MST1 in the Hippo signaling pathway which plays a pivotal role in organ size control and tumor suppression by restricting proliferation and promoting apoptosis. The core of this pathway is composed of a kinase cascade wherein STK3/MST2 and STK4/MST1, in complex with its regulatory protein SAV1, phosphorylates and activates LATS1/2 in complex with its regulatory protein MOB1, which in turn phosphorylates and inactivates YAP1 oncoprotein and WWTR1/TAZ. Phosphorylation of YAP1 by LATS1/2 inhibits its translocation into the nucleus to regulate cellular genes important for cell proliferation, cell death, and cell migration. SAV1 is required for STK3/MST2 and STK4/MST1 activation and promotes cell-cycle exit and terminal differentiation in developing epithelial tissues. Plays a role in centrosome disjunction by regulating the localization of NEK2 to centrosomes, and its ability to phosphorylate CROCC and CEP250. In conjunction with STK3/MST2, activates the transcriptional activity of ESR1 through the modulation of its phosphorylation. This Mus musculus (Mouse) protein is Protein salvador homolog 1 (Sav1).